We begin with the raw amino-acid sequence, 158 residues long: MAVSDLSHRFEGESVGRALELVGERWTLLILREAFFGVRRFGQLARNLGIPRPTLSSRLRMLVELGLFDRVPYSSDPERHEYRLTEAGRDLFAAIVVLMQWGDEYLPRPEGPPIKLRHHTCGEHADPRLICTHCGEEITARNVTPEPGPGFKAKLASS.

One can recognise an HTH hxlR-type domain in the interval 13-110 (ESVGRALELV…WGDEYLPRPE (98 aa)).

This is an uncharacterized protein from Mycobacterium tuberculosis (strain CDC 1551 / Oshkosh).